The primary structure comprises 180 residues: Putative protein 33K (180 aa).

The disordered stretch occupies residues 31–108 (LEEAYKQLEK…AKAPRNYGTP (78 aa)). A compositionally biased stretch (basic and acidic residues) spans 33-43 (EAYKQLEKELG). Residues 60–78 (PLSEGELEEISEEEEEEGE) are compositionally biased toward acidic residues.

In Pantherophis guttatus (Corn snake), this protein is Putative protein 33K.